Here is a 428-residue protein sequence, read N- to C-terminus: Small ribosomal subunit protein uS2m (428 aa).

The disordered stretch occupies residues 30–50 (FLSQDNFTAPPPPPTNSKKQA).

Belongs to the universal ribosomal protein uS2 family. In terms of assembly, component of the mitochondrial small ribosomal subunit (mt-SSU). Mature N.crassa 74S mitochondrial ribosomes consist of a small (37S) and a large (54S) subunit. The 37S small subunit contains a 16S ribosomal RNA (16S mt-rRNA) and 32 different proteins. The 54S large subunit contains a 23S rRNA (23S mt-rRNA) and 42 different proteins.

It localises to the mitochondrion. Component of the mitochondrial ribosome (mitoribosome), a dedicated translation machinery responsible for the synthesis of mitochondrial genome-encoded proteins, including at least some of the essential transmembrane subunits of the mitochondrial respiratory chain. The mitoribosomes are attached to the mitochondrial inner membrane and translation products are cotranslationally integrated into the membrane. This is Small ribosomal subunit protein uS2m (mrp4) from Neurospora crassa (strain ATCC 24698 / 74-OR23-1A / CBS 708.71 / DSM 1257 / FGSC 987).